The sequence spans 161 residues: Zinc finger protein KNUCKLES (161 aa).

The disordered stretch occupies residues 1–33 (MAEPPPSYLHFVGPAKTRSSSKRHSFSSSAHPA). The C2H2-type zinc finger occupies 38-60 (FPCQYCPRKFYTSQALGGHQNAH). The disordered stretch occupies residues 142–161 (GGNGVMEEDEPLDLDLSLRL). Positions 155–159 (LDLSL) match the EAR-like (transcriptional repression) motif.

In terms of tissue distribution, first expressed in developing carpel primordia, and later in stamens and ovules of flower buds.

The protein localises to the nucleus. Its function is as follows. May function as a transcriptional repressor of cellular proliferation that regulates floral determinacy and relative size of basal pattern elements along the proximo-distal axis of the developing gynoecium. The chain is Zinc finger protein KNUCKLES (KNU) from Arabidopsis thaliana (Mouse-ear cress).